We begin with the raw amino-acid sequence, 165 residues long: Phosphopantetheine adenylyltransferase (165 aa).

S10 lines the substrate pocket. ATP-binding positions include 10–11 and H18; that span reads SF. 3 residues coordinate substrate: K42, T79, and R93. ATP-binding positions include 94–96, E104, and 129–135; these read GLR and VRPITAT.

It belongs to the bacterial CoaD family. Homohexamer. Mg(2+) serves as cofactor.

It is found in the cytoplasm. It carries out the reaction (R)-4'-phosphopantetheine + ATP + H(+) = 3'-dephospho-CoA + diphosphate. The protein operates within cofactor biosynthesis; coenzyme A biosynthesis; CoA from (R)-pantothenate: step 4/5. In terms of biological role, reversibly transfers an adenylyl group from ATP to 4'-phosphopantetheine, yielding dephospho-CoA (dPCoA) and pyrophosphate. The protein is Phosphopantetheine adenylyltransferase of Nitrobacter hamburgensis (strain DSM 10229 / NCIMB 13809 / X14).